Consider the following 75-residue polypeptide: uncharacterized protein (75 aa).

4Fe-4S ferredoxin-type domains are found at residues 2-30 and 37-68; these read SHTI…KGEG and DWYW…KEEP. 2 residues coordinate [3Fe-4S] cluster: Cys-10 and Cys-16. Cys-20, Cys-46, Cys-49, and Cys-52 together coordinate [4Fe-4S] cluster. Cys-56 contacts [3Fe-4S] cluster.

[4Fe-4S] cluster serves as cofactor. [3Fe-4S] cluster is required as a cofactor.

The protein resides in the plastid. It is found in the chloroplast. This is an uncharacterized protein from Porphyra purpurea (Red seaweed).